Consider the following 446-residue polypeptide: Exodeoxyribonuclease 7 large subunit (446 aa).

The protein belongs to the XseA family. In terms of assembly, heterooligomer composed of large and small subunits.

It localises to the cytoplasm. It carries out the reaction Exonucleolytic cleavage in either 5'- to 3'- or 3'- to 5'-direction to yield nucleoside 5'-phosphates.. Functionally, bidirectionally degrades single-stranded DNA into large acid-insoluble oligonucleotides, which are then degraded further into small acid-soluble oligonucleotides. In Streptococcus pneumoniae (strain Taiwan19F-14), this protein is Exodeoxyribonuclease 7 large subunit.